We begin with the raw amino-acid sequence, 109 residues long: Hainantoxin-XVIII-5 (109 aa).

An N-terminal signal peptide occupies residues 1 to 18 (MKLSIIIIATSLVIAVVA). A propeptide spanning residues 19–46 (FPSKDSKAIENDKTEQRMEIVVQETARA) is cleaved from the precursor. 4 disulfides stabilise this stretch: Cys-47-Cys-62, Cys-55-Cys-68, Cys-59-Cys-108, and Cys-61-Cys-81.

The protein belongs to the neurotoxin 25 family. F7 subfamily. As to expression, expressed by the venom gland.

It is found in the secreted. In terms of biological role, putative ion channel inhibitor. The polypeptide is Hainantoxin-XVIII-5 (Cyriopagopus hainanus (Chinese bird spider)).